Here is a 55-residue protein sequence, read N- to C-terminus: Seripauperin-7 (55 aa).

The signal sequence occupies residues 1-20; sequence MVKLTSIAAGVAAIAAGASA.

The protein belongs to the SRP1/TIP1 family. Seripauperin subfamily.

The polypeptide is Seripauperin-7 (PAU7) (Saccharomyces cerevisiae (strain ATCC 204508 / S288c) (Baker's yeast)).